The chain runs to 439 residues: GTPase Der (439 aa).

EngA-type G domains lie at 4–169 and 177–352; these read AMVA…PEND and IKIA…EEYN. Residues 10–17, 57–61, 120–123, 183–190, 230–234, and 295–298 contribute to the GTP site; these read GRPNVGKS, DTGGL, NKVD, DTAGI, and NKWD. One can recognise a KH-like domain in the interval 353 to 437; that stretch reads KRITTGLLNN…PIVISTKKRG (85 aa).

This sequence belongs to the TRAFAC class TrmE-Era-EngA-EngB-Septin-like GTPase superfamily. EngA (Der) GTPase family. As to quaternary structure, associates with the 50S ribosomal subunit.

In terms of biological role, GTPase that plays an essential role in the late steps of ribosome biogenesis. The protein is GTPase Der of Caldanaerobacter subterraneus subsp. tengcongensis (strain DSM 15242 / JCM 11007 / NBRC 100824 / MB4) (Thermoanaerobacter tengcongensis).